The sequence spans 261 residues: Small ribosomal subunit protein eS4B (261 aa).

Ser-32 bears the Phosphoserine mark. Residues 42-105 form the S4 RNA-binding domain; it reads LPLIVFLRNR…NENFRLVYDV (64 aa). Lys-62 participates in a covalent cross-link: Glycyl lysine isopeptide (Lys-Gly) (interchain with G-Cter in ubiquitin). Thr-115 is modified (phosphothreonine). Residues Lys-134, Lys-161, Lys-168, Lys-174, Lys-179, Lys-211, and Lys-233 each participate in a glycyl lysine isopeptide (Lys-Gly) (interchain with G-Cter in ubiquitin) cross-link. Ser-247 carries the post-translational modification Phosphoserine.

The protein belongs to the eukaryotic ribosomal protein eS4 family. As to quaternary structure, component of the small ribosomal subunit (SSU). Mature yeast ribosomes consist of a small (40S) and a large (60S) subunit. The 40S small subunit contains 1 molecule of ribosomal RNA (18S rRNA) and 33 different proteins (encoded by 57 genes). The large 60S subunit contains 3 rRNA molecules (25S, 5.8S and 5S rRNA) and 46 different proteins (encoded by 81 genes).

The protein localises to the cytoplasm. Component of the ribosome, a large ribonucleoprotein complex responsible for the synthesis of proteins in the cell. The small ribosomal subunit (SSU) binds messenger RNAs (mRNAs) and translates the encoded message by selecting cognate aminoacyl-transfer RNA (tRNA) molecules. The large subunit (LSU) contains the ribosomal catalytic site termed the peptidyl transferase center (PTC), which catalyzes the formation of peptide bonds, thereby polymerizing the amino acids delivered by tRNAs into a polypeptide chain. The nascent polypeptides leave the ribosome through a tunnel in the LSU and interact with protein factors that function in enzymatic processing, targeting, and the membrane insertion of nascent chains at the exit of the ribosomal tunnel. In Saccharomyces cerevisiae (strain ATCC 204508 / S288c) (Baker's yeast), this protein is Small ribosomal subunit protein eS4B.